Consider the following 337-residue polypeptide: Cytoskeleton protein RodZ (337 aa).

The Cytoplasmic segment spans residues 1–111 (MNTEATHDQN…LGKRRKKRDG (111 aa)). Residues 19-71 (LRNAREQLGLSQQAVAERLCLKVSTVRDIEEDKAPADLASTFLRGYIRSYARL) enclose the HTH cro/C1-type domain. Residues 30–49 (QQAVAERLCLKVSTVRDIEE) constitute a DNA-binding region (H-T-H motif). A helical; Signal-anchor for type II membrane protein membrane pass occupies residues 112 to 132 (WLMTFTWLVLFVVIGLSGAWW). At 133-337 (WQDHKAQQEE…TLNAEQSPAQ (205 aa)) the chain is on the periplasmic side. A compositionally biased stretch (polar residues) spans 145–167 (TMADQSSAELSSNSEQGQSVPLN). The tract at residues 145–236 (TMADQSSAEL…TAATTPDGAA (92 aa)) is disordered. Low complexity predominate over residues 168-207 (TSTTTDPATTSTPPASVDTTATNTQTPAVTAPAPAVDPQQ). The span at 208–218 (NAVVSPSQANV) shows a compositional bias: polar residues. The span at 219–236 (DTAATPAPTAATTPDGAA) shows a compositional bias: low complexity.

The protein belongs to the RodZ family.

Its subcellular location is the cell inner membrane. Its function is as follows. Cytoskeletal protein that is involved in cell-shape control through regulation of the length of the long axis. The protein is Cytoskeleton protein RodZ of Escherichia coli O9:H4 (strain HS).